The chain runs to 20 residues: Blooming-related protein 2 (20 aa).

Positions 1–20 (VSAEYLERQGPKDDXDCFDD) are disordered.

Its function is as follows. Possible 'checkpoint' protein for cell division in the blooming process. This chain is Blooming-related protein 2, found in Prorocentrum triestinum (Red tide alga).